A 135-amino-acid chain; its full sequence is Large ribosomal subunit protein uL15 (135 aa).

The disordered stretch occupies residues 21 to 66 (VGRGQGSGMGKTATRGGKGQTARTGYKAKRGFEGGQQPLQRRLPKI).

This sequence belongs to the universal ribosomal protein uL15 family. Part of the 50S ribosomal subunit.

In terms of biological role, binds to the 23S rRNA. In Helicobacter pylori (strain HPAG1), this protein is Large ribosomal subunit protein uL15.